Reading from the N-terminus, the 300-residue chain is Acetylglutamate kinase (300 aa).

Residues 68-69 (GG), R90, and N194 contribute to the substrate site.

Belongs to the acetylglutamate kinase family. ArgB subfamily.

It is found in the cytoplasm. The catalysed reaction is N-acetyl-L-glutamate + ATP = N-acetyl-L-glutamyl 5-phosphate + ADP. The protein operates within amino-acid biosynthesis; L-arginine biosynthesis; N(2)-acetyl-L-ornithine from L-glutamate: step 2/4. Its function is as follows. Catalyzes the ATP-dependent phosphorylation of N-acetyl-L-glutamate. In Methanocaldococcus jannaschii (strain ATCC 43067 / DSM 2661 / JAL-1 / JCM 10045 / NBRC 100440) (Methanococcus jannaschii), this protein is Acetylglutamate kinase.